We begin with the raw amino-acid sequence, 83 residues long: MKASMYLALAGLVLLFVVGYASESEEKEFPRELLSKIFAVDDFKGEERGCKGFGDSCTPGKNECCPNYACSSKHKWCKVYLGK.

A signal peptide spans 1 to 21 (MKASMYLALAGLVLLFVVGYA). A propeptide spanning residues 22-48 (SESEEKEFPRELLSKIFAVDDFKGEER) is cleaved from the precursor. 3 disulfides stabilise this stretch: Cys50/Cys65, Cys57/Cys70, and Cys64/Cys77. Position 81 is a leucine amide (Leu81).

The protein belongs to the neurotoxin 10 (Hwtx-1) family. 15 (Hntx-3) subfamily. In terms of assembly, monomer. As to expression, expressed by the venom gland.

It is found in the secreted. Functionally, selective antagonist of neuronal tetrodotoxin (TTX)-sensitive voltage-gated sodium channels (IC(50)=1270 nM on Nav1.1/SCN1A, 270 nM on Nav1.2/SCN2A, 491 nM on Nav1.3/SCN3A and 232 nM on Nav1.7/SCN9A). This toxin suppress Nav1.7 current amplitude without significantly altering the activation, inactivation, and repriming kinetics. Short extreme depolarizations partially activate the toxin-bound channel, indicating voltage-dependent inhibition of this toxin. This toxin increases the deactivation of the Nav1.7 current after extreme depolarizations. The toxin-Nav1.7 complex is gradually dissociated upon prolonged strong depolarizations in a voltage-dependent manner, and the unbound toxin rebinds to Nav1.7 after a long repolarization. Moreover, analysis of chimeric channels showed that the DIIS3-S4 linker is critical for toxin binding to Nav1.7. These data are consistent with this toxin interacting with Nav1.7 site 4 and trapping the domain II voltage sensor in the closed state. The chain is Hainantoxin-III 2 from Cyriopagopus hainanus (Chinese bird spider).